Reading from the N-terminus, the 1335-residue chain is Regulatory-associated protein of mTOR (1335 aa).

2 positions are modified to phosphoserine: Ser-44 and Ser-122. Ser-696 carries the post-translational modification Phosphoserine; by MAPK8. Thr-700 carries O-linked (GlcNAc) threonine glycosylation. Residue Thr-706 is modified to Phosphothreonine; by MAPK8. Phosphoserine; by RPS6KA1 occurs at positions 719 and 721. Ser-722 carries the post-translational modification Phosphoserine; by AMPK and RPS6KA1. Ser-738 is modified (phosphoserine). The disordered stretch occupies residues 749-771; that stretch reads GSSVAFSPGNLSTSSSASSTLGS. Residues 755–771 are compositionally biased toward low complexity; sequence SPGNLSTSSSASSTLGS. Phosphoserine is present on Ser-791. Ser-792 carries the phosphoserine; by AMPK modification. Residues Ser-836 and Ser-855 each carry the phosphoserine modification. The span at 853 to 866 shows a compositional bias: polar residues; the sequence is TSSLTQSAPASPTN. The disordered stretch occupies residues 853-942; that stretch reads TSSLTQSAPA…GPDQTTDDAD (90 aa). Position 859 is a phosphoserine; by MTOR (Ser-859). Ser-863 carries the phosphoserine; by MAPK8, MTOR and NLK modification. The residue at position 865 (Thr-865) is a Phosphothreonine. Residue Ser-877 is modified to Phosphoserine. Low complexity predominate over residues 877–887; sequence SPPASSTSSCS. Residues 888 to 898 show a composition bias toward polar residues; sequence LTNDVAKQTVS. Residues Lys-932 and Lys-948 each participate in a glycyl lysine isopeptide (Lys-Gly) (interchain with G-Cter in ubiquitin) cross-link. Ser-982 carries the post-translational modification Phosphoserine. WD repeat units lie at residues 1020 to 1061, 1065 to 1106, 1121 to 1160, 1164 to 1203, 1209 to 1249, 1251 to 1291, and 1299 to 1335; these read NRNP…DYFH, PRYT…EKNP, TTRG…KVQD, GADS…SECR, EHTA…SVNV, QIVK…NNIK, and QRVG…KRVR. Lys-1097 is subject to N6-acetyllysine.

Belongs to the WD repeat RAPTOR family. As to quaternary structure, part of the mechanistic target of rapamycin complex 1 (mTORC1) which contains MTOR, MLST8 and RPTOR. mTORC1 associates with AKT1S1/PRAS40, which inhibits its activity. mTORC1 associates with DEPTOR, which regulates its activity. mTORC1 binds to and is inhibited by FKBP12-rapamycin. Forms a complex with MTOR under both leucine-rich and -poor conditions. Interacts with (via TOS motifs) EIF4EBP1 and RPS6KB1; interaction is independent of its association with MTOR. Binds preferentially to poorly or non-phosphorylated forms of EIF4EBP1, and this binding is critical to the ability of MTOR to catalyze phosphorylation. Interacts with ULK1 in a nutrient-dependent manner; the interaction is reduced during starvation. Interacts with GTP-bound form of RagA/RRAGA or RagB/RRAGB and GDP-bound form of RagC/RRAGC or RagD/RRAGD, promoting recruitment of mTORC1 to the lysosomes. Interacts (when phosphorylated by AMPK) with 14-3-3 protein, leading to inhibition of its activity. Interacts with SPAG5; SPAG5 competes with MTOR for RPTOR-binding, resulting in decreased mTORC1 formation. Interacts with WAC; WAC positively regulates MTOR activity by promoting the assembly of the TTT complex composed of TELO2, TTI1 and TTI2 and the RUVBL complex composed of RUVBL1 and RUVBL2 into the TTT-RUVBL complex which leads to the dimerization of the mTORC1 complex and its subsequent activation. Interacts with G3BP1. The complex formed with G3BP1 and SPAG5 is increased by oxidative stress. Interacts with HTR6. Interacts with PIH1D1. Interacts with LARP1. Interacts with BRAT1. Interacts with SIK3. Interacts with SLC38A7; this interaction mediates the recruitment of mTORC1 to the lysosome and its subsequent activation. In terms of processing, insulin-stimulated phosphorylation at Ser-863 by MTOR and MAPK8 regulates mTORC1 activity. Phosphorylated at Ser-863 by NLK in response to stress, disrupting the interaction with small GTPases Rag (RagA/RRAGA, RagB/RRAGB, RagC/RRAGC and/or RagD/RRAGD), thereby preventing lysosome recruitment and activation of the mTORC1 complex. Osmotic stress also induces phosphorylation at Ser-696, Thr-706 and Ser-863 by MAPK8. Ser-863 phosphorylation is required for phosphorylation at Ser-855 and Ser-859. In response to nutrient limitation, phosphorylated at Ser-722 and Ser-792 by AMPK; phosphorylation promotes interaction with 14-3-3 proteins, leading to negative regulation of the mTORC1 complex. Phosphorylation at Ser-722 and Ser-792 by AMPK in response to glucose starvation inhibits O-GlcNAcylation by OGT and subsequent activation of mTORC1. In response to growth factors, phosphorylated at Ser-719, Ser-721 and Ser-722 by RPS6KA1, which stimulates mTORC1 activity. Phosphorylation at Ser-791 by PKA downstream of cAMP inhibits the mTORC1 complex. Phosphorylated at Ser-877 by TBK1, leading to negative regulation of the mTORC1 complex. Post-translationally, O-GlcNAcylated by OGT upon glucose sufficiency, promoting interaction with small GTPases Rag (RagA/RRAGA, RagB/RRAGB, RagC/RRAGC and/or RagD/RRAGD) and subsequent recruitment of mTORC1 to lysosomal membranes, leading to activation of the mTORC1 complex. Phosphorylation at Ser-722 and Ser-792 by AMPK in response to glucose starvation inhibits O-GlcNAcylation. Acetylation at Lys-1097 by EP300/p300 in response to leucine metabolite acetyl-coA promotes its activity, leading to activation of the mTORC1 complex. Acetylation is decreased in response to fasting. Phosphorylated at Ser-877 by TBK1, leading to negative regulation of the mTORC1 complex. In terms of processing, ubiquitinated, leading to its degradation by the proteasome. Deubiquitinated by OTUB1 via a non-catalytic mechanism. Ubiquitinated by an E3 ubiquitin ligase complex containing VHL.

The protein resides in the cytoplasm. Its subcellular location is the lysosome. The protein localises to the cytoplasmic granule. Component of the mechanistic target of rapamycin complex 1 (mTORC1), an evolutionarily conserved central nutrient sensor that stimulates anabolic reactions and macromolecule biosynthesis to promote cellular biomass generation and growth. In response to nutrients, growth factors or amino acids, mTORC1 is recruited to the lysosome membrane and promotes protein, lipid and nucleotide synthesis by phosphorylating several substrates, such as ribosomal protein S6 kinase (RPS6KB1 and RPS6KB2) and EIF4EBP1 (4E-BP1). In the same time, it inhibits catabolic pathways by phosphorylating the autophagy initiation components ULK1 and ATG13, as well as transcription factor TFEB, a master regulators of lysosomal biogenesis and autophagy. The mTORC1 complex is inhibited in response to starvation and amino acid depletion. Within the mTORC1 complex, RPTOR acts both as a molecular adapter, which (1) mediates recruitment of mTORC1 to lysosomal membranes via interaction with small GTPases Rag (RagA/RRAGA, RagB/RRAGB, RagC/RRAGC and/or RagD/RRAGD), and a (2) substrate-specific adapter, which promotes substrate specificity by binding to TOS motif-containing proteins and direct them towards the active site of the MTOR kinase domain for phosphorylation. mTORC1 complex regulates many cellular processes, such as odontoblast and osteoclast differentiation or neuronal transmission. mTORC1 complex in excitatory neuronal transmission is required for the prosocial behavior induced by the psychoactive substance lysergic acid diethylamide (LSD). This chain is Regulatory-associated protein of mTOR, found in Mus musculus (Mouse).